We begin with the raw amino-acid sequence, 476 residues long: Undecaprenyl-phosphate galactose phosphotransferase (476 aa).

5 consecutive transmembrane segments (helical) span residues 15–35 (IFLA…SLGC), 52–72 (LDTR…WFWI), 93–113 (TIVI…WQFS), 115–135 (YVWV…RALT), and 283–303 (FDIV…IYLW). The Cytoplasmic portion of the chain corresponds to 304-476 (YKVTRDGGPA…KVVLRRDGAY (173 aa)).

This sequence belongs to the bacterial sugar transferase family.

The protein resides in the cell inner membrane. It carries out the reaction di-trans,octa-cis-undecaprenyl phosphate + UDP-alpha-D-galactose = alpha-D-galactosyl-di-trans,octa-cis-undecaprenyl diphosphate + UMP. Its pathway is bacterial outer membrane biogenesis; LPS O-antigen biosynthesis. Functionally, is responsible for transferring galactose-1-phosphate to the lipid precursor undecaprenol phosphate in the first steps of O-polysaccharide biosynthesis. The polypeptide is Undecaprenyl-phosphate galactose phosphotransferase (rfbP) (Salmonella typhimurium (strain LT2 / SGSC1412 / ATCC 700720)).